Here is a 189-residue protein sequence, read N- to C-terminus: dCTP deaminase (189 aa).

Residues 112 to 117, 136 to 138, Q157, Y171, and Q181 contribute to the dCTP site; these read KSTYAR and TLE. Residue E138 is the Proton donor/acceptor of the active site.

The protein belongs to the dCTP deaminase family. Homotrimer.

The enzyme catalyses dCTP + H2O + H(+) = dUTP + NH4(+). It functions in the pathway pyrimidine metabolism; dUMP biosynthesis; dUMP from dCTP (dUTP route): step 1/2. Functionally, catalyzes the deamination of dCTP to dUTP. This is dCTP deaminase from Paraburkholderia xenovorans (strain LB400).